Consider the following 169-residue polypeptide: Peptide deformylase (169 aa).

Fe cation contacts are provided by cysteine 91 and histidine 133. Residue glutamate 134 is part of the active site. Histidine 137 serves as a coordination point for Fe cation.

It belongs to the polypeptide deformylase family. Fe(2+) is required as a cofactor.

It catalyses the reaction N-terminal N-formyl-L-methionyl-[peptide] + H2O = N-terminal L-methionyl-[peptide] + formate. Functionally, removes the formyl group from the N-terminal Met of newly synthesized proteins. Requires at least a dipeptide for an efficient rate of reaction. N-terminal L-methionine is a prerequisite for activity but the enzyme has broad specificity at other positions. In Serratia proteamaculans (strain 568), this protein is Peptide deformylase.